We begin with the raw amino-acid sequence, 458 residues long: Enolase (458 aa).

Gln177 serves as a coordination point for (2R)-2-phosphoglycerate. Glu219 acts as the Proton donor in catalysis. Residues Asp256, Glu310, and Asp337 each contribute to the Mg(2+) site. (2R)-2-phosphoglycerate contacts are provided by Lys362, Arg391, Ser392, and Lys413. Lys362 (proton acceptor) is an active-site residue.

The protein belongs to the enolase family. Mg(2+) is required as a cofactor.

It is found in the cytoplasm. It localises to the secreted. Its subcellular location is the cell surface. The enzyme catalyses (2R)-2-phosphoglycerate = phosphoenolpyruvate + H2O. It functions in the pathway carbohydrate degradation; glycolysis; pyruvate from D-glyceraldehyde 3-phosphate: step 4/5. Its function is as follows. Catalyzes the reversible conversion of 2-phosphoglycerate (2-PG) into phosphoenolpyruvate (PEP). It is essential for the degradation of carbohydrates via glycolysis. The chain is Enolase from Mycoplasma genitalium (strain ATCC 33530 / DSM 19775 / NCTC 10195 / G37) (Mycoplasmoides genitalium).